Consider the following 407-residue polypeptide: Carbamoyl phosphate synthase small chain (407 aa).

The interval methionine 1–alanine 205 is CPSase. L-glutamine contacts are provided by serine 60, glycine 257, and glycine 259. Residues histidine 209–glutamine 397 form the Glutamine amidotransferase type-1 domain. Cysteine 286 serves as the catalytic Nucleophile. L-glutamine contacts are provided by leucine 287, glutamine 290, asparagine 328, glycine 330, and phenylalanine 331. Catalysis depends on residues histidine 370 and glutamate 372.

The protein belongs to the CarA family. In terms of assembly, composed of two chains; the small (or glutamine) chain promotes the hydrolysis of glutamine to ammonia, which is used by the large (or ammonia) chain to synthesize carbamoyl phosphate. Tetramer of heterodimers (alpha,beta)4.

It catalyses the reaction hydrogencarbonate + L-glutamine + 2 ATP + H2O = carbamoyl phosphate + L-glutamate + 2 ADP + phosphate + 2 H(+). The catalysed reaction is L-glutamine + H2O = L-glutamate + NH4(+). It participates in amino-acid biosynthesis; L-arginine biosynthesis; carbamoyl phosphate from bicarbonate: step 1/1. Its pathway is pyrimidine metabolism; UMP biosynthesis via de novo pathway; (S)-dihydroorotate from bicarbonate: step 1/3. Its function is as follows. Small subunit of the glutamine-dependent carbamoyl phosphate synthetase (CPSase). CPSase catalyzes the formation of carbamoyl phosphate from the ammonia moiety of glutamine, carbonate, and phosphate donated by ATP, constituting the first step of 2 biosynthetic pathways, one leading to arginine and/or urea and the other to pyrimidine nucleotides. The small subunit (glutamine amidotransferase) binds and cleaves glutamine to supply the large subunit with the substrate ammonia. The chain is Carbamoyl phosphate synthase small chain from Brucella abortus (strain S19).